A 512-amino-acid chain; its full sequence is CaM kinase-like vesicle-associated protein (512 aa).

One can recognise a Protein kinase domain in the interval 24–286 (YDLGQVIKTE…AEEAISHEWI (263 aa)). Residues 328-347 (APEQSGTAATQSASDAATPG) are disordered. The span at 332 to 347 (SGTAATQSASDAATPG) shows a compositional bias: low complexity. Residue Ser-392 is modified to Phosphoserine. The segment at 393 to 512 (ADRSATPATD…AQESQRVETS (120 aa)) is disordered. Residues 398-439 (TPATDGSATPATDGSVTPATDGSITPATDGSVTPATDRSATP) show a composition bias toward polar residues. Thr-446 is modified (phosphothreonine). Positions 449 to 460 (TEESTVPATQSS) are enriched in polar residues. The span at 461–478 (ALPAAKAAATPEPAVAQP) shows a compositional bias: low complexity. Thr-470 bears the Phosphothreonine mark.

It belongs to the protein kinase superfamily. CAMK Ser/Thr protein kinase family. Interacts with calmodulin, in the presence of calcium. It depends on Ca(2+) as a cofactor.

It localises to the cell membrane. Its subcellular location is the cytoplasmic vesicle membrane. Functionally, does not appear to have detectable kinase activity. This Mus musculus (Mouse) protein is CaM kinase-like vesicle-associated protein (Camkv).